A 558-amino-acid chain; its full sequence is Phosphatase and actin regulator 3 (558 aa).

Residues 1–11 (MAASEDGSSCL) are compositionally biased toward polar residues. Disordered regions lie at residues 1–69 (MAAS…KLAT), 81–288 (KKKN…RPLP), and 300–366 (LATK…ENLM). The span at 18–33 (QSDPSFLSDSSATSTD) shows a compositional bias: low complexity. A Phosphothreonine modification is found at Thr-69. An RPEL 1 repeat occupies 92–117 (SALEKKMAGRQGREELIKQGLLEMME). Over residues 94-108 (LEKKMAGRQGREELI) the composition is skewed to basic and acidic residues. A compositionally biased stretch (polar residues) spans 144–169 (ETLTSEGAQPGSPSASGTDQVSQDEL). Pro residues predominate over residues 228–239 (PSPPLLPTPPPK). Phosphoserine is present on Ser-229. At Thr-235 the chain carries Phosphothreonine. 2 stretches are compositionally biased toward basic and acidic residues: residues 300-341 (LATK…RDEA) and 354-363 (ATKDSEENKE). RPEL repeat units follow at residues 400–425 (ELLA…PRRT), 438–463 (MKLS…KQRN), and 476–501 (QRLT…IRFS). Residues 449–485 (AVEELERRNILKQRNDQTEQEERREIKQRLTRKLNQR) are a coiled coil.

This sequence belongs to the phosphatase and actin regulator family. As to quaternary structure, binds PPP1CA and actin; thus inhibiting the protein phosphatase 1 (PP1) activity.

It localises to the nucleus matrix. This is Phosphatase and actin regulator 3 (Phactr3) from Mus musculus (Mouse).